The chain runs to 249 residues: Mediator of RNA polymerase II transcription subunit 8 (249 aa).

The stretch at 1–26 (MQREEKQLDMLLEAVLNRLNDLKHSI) forms a coiled coil. Polar residues-rich tracts occupy residues 215-224 (SPMSAVSPSG) and 235-249 (IKTN…HPYR). Positions 215–249 (SPMSAVSPSGNAPMGKMPSGIKTNIKSANQVHPYR) are disordered.

Belongs to the Mediator complex subunit 8 family. Component of the Mediator complex.

It localises to the nucleus. In terms of biological role, component of the Mediator complex, a coactivator involved in the regulated transcription of nearly all RNA polymerase II-dependent genes. Mediator functions as a bridge to convey information from gene-specific regulatory proteins to the basal RNA polymerase II transcription machinery. Mediator is recruited to promoters by direct interactions with regulatory proteins and serves as a scaffold for the assembly of a functional preinitiation complex with RNA polymerase II and the general transcription factors. The polypeptide is Mediator of RNA polymerase II transcription subunit 8 (MED8) (Anopheles gambiae (African malaria mosquito)).